Reading from the N-terminus, the 435-residue chain is Methylenetetrahydrofolate--tRNA-(uracil-5-)-methyltransferase TrmFO (435 aa).

Position 9–14 (9–14 (GGGLAG)) interacts with FAD.

Belongs to the MnmG family. TrmFO subfamily. The cofactor is FAD.

Its subcellular location is the cytoplasm. It carries out the reaction uridine(54) in tRNA + (6R)-5,10-methylene-5,6,7,8-tetrahydrofolate + NADH + H(+) = 5-methyluridine(54) in tRNA + (6S)-5,6,7,8-tetrahydrofolate + NAD(+). The catalysed reaction is uridine(54) in tRNA + (6R)-5,10-methylene-5,6,7,8-tetrahydrofolate + NADPH + H(+) = 5-methyluridine(54) in tRNA + (6S)-5,6,7,8-tetrahydrofolate + NADP(+). Functionally, catalyzes the folate-dependent formation of 5-methyl-uridine at position 54 (M-5-U54) in all tRNAs. In Geobacter sp. (strain M21), this protein is Methylenetetrahydrofolate--tRNA-(uracil-5-)-methyltransferase TrmFO.